The chain runs to 278 residues: Ribosomal RNA small subunit methyltransferase A (278 aa).

Positions 28, 30, 55, 77, 103, and 122 each coordinate S-adenosyl-L-methionine.

The protein belongs to the class I-like SAM-binding methyltransferase superfamily. rRNA adenine N(6)-methyltransferase family. RsmA subfamily.

It localises to the cytoplasm. The enzyme catalyses adenosine(1518)/adenosine(1519) in 16S rRNA + 4 S-adenosyl-L-methionine = N(6)-dimethyladenosine(1518)/N(6)-dimethyladenosine(1519) in 16S rRNA + 4 S-adenosyl-L-homocysteine + 4 H(+). Its function is as follows. Specifically dimethylates two adjacent adenosines (A1518 and A1519) in the loop of a conserved hairpin near the 3'-end of 16S rRNA in the 30S particle. May play a critical role in biogenesis of 30S subunits. In Cereibacter sphaeroides (strain ATCC 17029 / ATH 2.4.9) (Rhodobacter sphaeroides), this protein is Ribosomal RNA small subunit methyltransferase A.